We begin with the raw amino-acid sequence, 23 residues long: Basic phospholipase A2 intermexin (23 aa).

The protein belongs to the phospholipase A2 family. Group II subfamily. Requires Ca(2+) as cofactor. Post-translationally, contains 7 disulfide bonds. In terms of tissue distribution, expressed by the venom gland.

The protein localises to the secreted. It carries out the reaction a 1,2-diacyl-sn-glycero-3-phosphocholine + H2O = a 1-acyl-sn-glycero-3-phosphocholine + a fatty acid + H(+). Functionally, snake venom phospholipase A2 (PLA2) that shows presynaptic neurotoxicity and low myotoxicity. PLA2 catalyzes the calcium-dependent hydrolysis of the 2-acyl groups in 3-sn-phosphoglycerides. This Gloydius intermedius (Central Asian pit viper) protein is Basic phospholipase A2 intermexin.